The sequence spans 235 residues: uncharacterized protein (235 aa).

Helical transmembrane passes span 2-22, 34-54, 56-76, 102-122, 147-167, 178-198, and 210-230; these read VIGP…GALL, MTSI…VKCA, LPAM…CLLE, FIQN…GIFG, MIFA…LLII, ILPL…GLLL, and MFPV…SAAW.

The protein resides in the cell membrane. This is an uncharacterized protein from Escherichia coli (strain K12).